The following is a 589-amino-acid chain: Multidrug transporter FLR2 (589 aa).

Residues 50–116 (KEEMKQDNQT…SSTKDASKPE (67 aa)) are disordered. Positions 56 to 73 (DNQTSTDSMSTSTQQETD) are enriched in low complexity. N-linked (GlcNAc...) asparagine glycosylation occurs at Asn-57. A compositionally biased stretch (basic and acidic residues) spans 107 to 116 (SSTKDASKPE). An N-linked (GlcNAc...) asparagine glycan is attached at Asn-136. 12 helical membrane passes run 143-163 (TFVI…SSIY), 179-199 (VVGT…PIIF), 211-231 (MPLY…CALV), 234-254 (IAGL…VLAT), 275-295 (WAVG…AMVV), 301-321 (WIFW…IFFF), 378-398 (PIIL…YLFF), 417-437 (GLAF…LIIF), 455-475 (LFLI…FFFG), 480-500 (IHWI…FNLF), 516-536 (ASVF…FPLF), and 551-571 (VAWG…IPFV).

Belongs to the major facilitator superfamily.

The protein localises to the cell membrane. Functionally, multidrug transporter that confers resistance to 5-flucytosine (5-FC) and clotrimazole. Further confers azole drug resistance. Plays direct roles in extrusion of 5-flucytosine and clotrimazole. The chain is Multidrug transporter FLR2 from Candida glabrata (strain ATCC 2001 / BCRC 20586 / JCM 3761 / NBRC 0622 / NRRL Y-65 / CBS 138) (Yeast).